The chain runs to 283 residues: Large ribosomal subunit protein uL2c (283 aa).

The interval 229–274 (GVVMNPIDHPHGGGEGKVPIGRKKPLTPWGHPALGRKSRKRRKYSD) is disordered. Positions 262-271 (LGRKSRKRRK) are enriched in basic residues.

Belongs to the universal ribosomal protein uL2 family. In terms of assembly, part of the 50S ribosomal subunit.

It localises to the plastid. The protein is Large ribosomal subunit protein uL2c (rpl2) of Aneura mirabilis (Parasitic liverwort).